Here is a 196-residue protein sequence, read N- to C-terminus: Holliday junction branch migration complex subunit RuvA (196 aa).

The tract at residues 1-63 (MYEYFKGIIS…EDAELLYGFA (63 aa)) is domain I. A domain II region spans residues 64–142 (TEEEKQLFLS…AAGSPAESKA (79 aa)). Residues 143–146 (PVQT) are flexible linker. The interval 147–196 (ADNQELEEAMEAMLALGYKAAELKKIKKFFEGTTDTAENYIKSALKMLVK) is domain III.

Belongs to the RuvA family. In terms of assembly, homotetramer. Forms an RuvA(8)-RuvB(12)-Holliday junction (HJ) complex. HJ DNA is sandwiched between 2 RuvA tetramers; dsDNA enters through RuvA and exits via RuvB. An RuvB hexamer assembles on each DNA strand where it exits the tetramer. Each RuvB hexamer is contacted by two RuvA subunits (via domain III) on 2 adjacent RuvB subunits; this complex drives branch migration. In the full resolvosome a probable DNA-RuvA(4)-RuvB(12)-RuvC(2) complex forms which resolves the HJ.

It localises to the cytoplasm. Functionally, the RuvA-RuvB-RuvC complex processes Holliday junction (HJ) DNA during genetic recombination and DNA repair, while the RuvA-RuvB complex plays an important role in the rescue of blocked DNA replication forks via replication fork reversal (RFR). RuvA specifically binds to HJ cruciform DNA, conferring on it an open structure. The RuvB hexamer acts as an ATP-dependent pump, pulling dsDNA into and through the RuvAB complex. HJ branch migration allows RuvC to scan DNA until it finds its consensus sequence, where it cleaves and resolves the cruciform DNA. The chain is Holliday junction branch migration complex subunit RuvA from Streptococcus sanguinis (strain SK36).